A 391-amino-acid polypeptide reads, in one-letter code: Protein CAJ1 (391 aa).

Residues 4-73 (ETEYYDILGI…RSKYDQFGKE (70 aa)) enclose the J domain. The interval 119–161 (KEDEEGTAATETEKADESTDGGMVKHDTNKAESLKKDKLSKEQ) is disordered. Residues 129-161 (ETEKADESTDGGMVKHDTNKAESLKKDKLSKEQ) show a composition bias toward basic and acidic residues. Lysine 132 is covalently cross-linked (Glycyl lysine isopeptide (Lys-Gly) (interchain with G-Cter in ubiquitin)).

The polypeptide is Protein CAJ1 (CAJ1) (Saccharomyces cerevisiae (strain ATCC 204508 / S288c) (Baker's yeast)).